A 284-amino-acid chain; its full sequence is D-tagatose-1,6-bisphosphate aldolase subunit GatY (284 aa).

Asp-82 serves as the catalytic Proton donor. Zn(2+)-binding residues include His-83 and His-180. Gly-181 contacts dihydroxyacetone phosphate. A Zn(2+)-binding site is contributed by His-208. Dihydroxyacetone phosphate contacts are provided by residues 209–211 (GAS) and 230–233 (NVAT).

Belongs to the class II fructose-bisphosphate aldolase family. TagBP aldolase GatY subfamily. As to quaternary structure, forms a complex with GatZ. It depends on Zn(2+) as a cofactor.

It catalyses the reaction D-tagatofuranose 1,6-bisphosphate = D-glyceraldehyde 3-phosphate + dihydroxyacetone phosphate. It functions in the pathway carbohydrate metabolism; D-tagatose 6-phosphate degradation; D-glyceraldehyde 3-phosphate and glycerone phosphate from D-tagatose 6-phosphate: step 2/2. Functionally, catalytic subunit of the tagatose-1,6-bisphosphate aldolase GatYZ, which catalyzes the reversible aldol condensation of dihydroxyacetone phosphate (DHAP or glycerone-phosphate) with glyceraldehyde 3-phosphate (G3P) to produce tagatose 1,6-bisphosphate (TBP). Requires GatZ subunit for full activity and stability. Is involved in the catabolism of galactitol. The polypeptide is D-tagatose-1,6-bisphosphate aldolase subunit GatY (Salmonella choleraesuis (strain SC-B67)).